Here is an 87-residue protein sequence, read N- to C-terminus: UPF0729 protein C18orf32 homolog (87 aa).

The protein belongs to the UPF0729 family.

The chain is UPF0729 protein C18orf32 homolog from Esox lucius (Northern pike).